Reading from the N-terminus, the 406-residue chain is MSKWKDVKKVVLAYSGGLDTSIILKWLQTELGAEVVTFTADLGQGEELEPARKKAEMLGIKEIFIEDVREEFVRDFVFPMFRANAVYEGVYLLGTSIARPLISKHLIDIAKKTGADAIAHGATGKGNDQVRFELSAYALNPDIKIIAPWRDWSFKSRTQLLEFAEQHQIPVAKDKKGEAPFSVDANLLHSSSEGKVLEDPSQEAPEYVHMRTISPETAPDKATIIKIGFEKGDAVSINGERLSPATLLAKLNDYGRDNGIGRLDLVENRFVGMKSRGVYETPGGTILLAAHRAIESITLDRGAAHLKDELMPRYAELIYYGFWFSPEREMLQAAIDHSQRHVEGEVTLKLYKGNVMVIGRESAKSLYSDKLVTFEDDQGAYDQKDAAGFIKLNALRLRTLAARDRK.

ATP contacts are provided by residues 13 to 21 (AYSGGLDTS) and Ala40. Residues Tyr91 and Ser96 each contribute to the L-citrulline site. Gly121 is a binding site for ATP. The L-aspartate site is built by Thr123, Asn127, and Asp128. Residue Asn127 participates in L-citrulline binding. Residues Arg131, Ser182, Ser191, Glu267, and Tyr279 each contribute to the L-citrulline site.

It belongs to the argininosuccinate synthase family. Type 1 subfamily. Homotetramer.

It localises to the cytoplasm. The enzyme catalyses L-citrulline + L-aspartate + ATP = 2-(N(omega)-L-arginino)succinate + AMP + diphosphate + H(+). It functions in the pathway amino-acid biosynthesis; L-arginine biosynthesis; L-arginine from L-ornithine and carbamoyl phosphate: step 2/3. The polypeptide is Argininosuccinate synthase (Brucella abortus (strain S19)).